Here is a 428-residue protein sequence, read N- to C-terminus: MDAASRPAVVIDNGTGYTKMGFAGNVEPCFITPTVVAVNDTFAGQTRANTTKGNWMAQHSAGVMADLDFFIGEDALARSRSSNTYNLSYPIHNGQVENWDTMERFWQQCIFNYLRCDPEDHYFLLTESPLTPPETREYTGEIMFETFNVPGLYIACQPVLALAAGYTTTKCEMTGVVVDVGDGATHIVPVADGYVIGSSIRSIPITGKDVTQFIQQLLKERGEHIPPEESFDVARRVKEMYCYTCSDIVKEFNKHDREPNKYIKHWSGIKPKTGAKYTCDIGYERFLGPEIFFHPEIYNNDFTTPLHVVIDKCIQSSPIDTRRALYKNIVLSGGSTMFKDFHRRLQRDLKKIVDARVLASNARLGGDAKAQPIEVNVVSHPIQRYAVWFGGSVLASTAEFYEACHTKAEYEEYGASICRTNPVFKGMY.

This sequence belongs to the actin family. ARP3 subfamily. As to quaternary structure, component of the Arp2/3 complex.

It is found in the cytoplasm. It localises to the cytoskeleton. Functions as ATP-binding component of the Arp2/3 complex which is involved in regulation of actin polymerization and together with an activating nucleation-promoting factor (NPF) mediates the formation of branched actin networks. Seems to contact the pointed end of the daughter actin filament. Regulates the directionality of cell expansion by regulating the actin organization, and thus the microtubules distribution and the fusion of small vacuoles. The chain is Actin-related protein 3 (ARP3) from Oryza sativa subsp. indica (Rice).